The sequence spans 293 residues: Protease HtpX (293 aa).

Transmembrane regions (helical) follow at residues 4–24 (IALF…VLSL) and 34–54 (GLLI…LLMS). Residue H139 coordinates Zn(2+). E140 is an active-site residue. H143 contributes to the Zn(2+) binding site. The next 2 membrane-spanning stretches (helical) occupy residues 158-178 (VVNT…AGFL) and 193-213 (LIYF…ASII). Position 222 (E222) interacts with Zn(2+).

The protein belongs to the peptidase M48B family. Zn(2+) serves as cofactor.

The protein localises to the cell inner membrane. In Salmonella agona (strain SL483), this protein is Protease HtpX.